The following is a 364-amino-acid chain: Spermidine/putrescine import ATP-binding protein PotA (364 aa).

Residues 5–235 enclose the ABC transporter domain; that stretch reads LSFKSVSKQY…PVNRFVADFI (231 aa). 37–44 is a binding site for ATP; that stretch reads GPSGCGKT.

It belongs to the ABC transporter superfamily. Spermidine/putrescine importer (TC 3.A.1.11.1) family. In terms of assembly, the complex is composed of two ATP-binding proteins (PotA), two transmembrane proteins (PotB and PotC) and a solute-binding protein (PotD).

It is found in the cell membrane. It carries out the reaction ATP + H2O + polyamine-[polyamine-binding protein]Side 1 = ADP + phosphate + polyamineSide 2 + [polyamine-binding protein]Side 1.. In terms of biological role, part of the ABC transporter complex PotABCD involved in spermidine/putrescine import. Responsible for energy coupling to the transport system. The sequence is that of Spermidine/putrescine import ATP-binding protein PotA from Staphylococcus saprophyticus subsp. saprophyticus (strain ATCC 15305 / DSM 20229 / NCIMB 8711 / NCTC 7292 / S-41).